The following is a 230-amino-acid chain: Cytidylate kinase (230 aa).

12 to 20 (GPSGAGKGT) lines the ATP pocket.

The protein belongs to the cytidylate kinase family. Type 1 subfamily.

It is found in the cytoplasm. The enzyme catalyses CMP + ATP = CDP + ADP. It carries out the reaction dCMP + ATP = dCDP + ADP. The protein is Cytidylate kinase of Shewanella loihica (strain ATCC BAA-1088 / PV-4).